The following is a 360-amino-acid chain: Spermidine/putrescine-binding periplasmic protein 1 (360 aa).

The signal sequence occupies residues 1-16 (MKKFAGLITASFVAAT).

This sequence belongs to the bacterial solute-binding protein PotD/PotF family.

The protein localises to the periplasm. In terms of biological role, required for the activity of the bacterial periplasmic transport system of putrescine and spermidine. Polyamine binding protein. This is Spermidine/putrescine-binding periplasmic protein 1 (potD-B) from Haemophilus influenzae (strain ATCC 51907 / DSM 11121 / KW20 / Rd).